The following is a 201-amino-acid chain: FMN-dependent NADH:quinone oxidoreductase (201 aa).

Residues Ser-10, 16–18 (SQS), 96–99 (MYNF), and 140–143 (SRGG) each bind FMN.

This sequence belongs to the azoreductase type 1 family. As to quaternary structure, homodimer. Requires FMN as cofactor.

It carries out the reaction 2 a quinone + NADH + H(+) = 2 a 1,4-benzosemiquinone + NAD(+). The enzyme catalyses N,N-dimethyl-1,4-phenylenediamine + anthranilate + 2 NAD(+) = 2-(4-dimethylaminophenyl)diazenylbenzoate + 2 NADH + 2 H(+). Functionally, quinone reductase that provides resistance to thiol-specific stress caused by electrophilic quinones. In terms of biological role, also exhibits azoreductase activity. Catalyzes the reductive cleavage of the azo bond in aromatic azo compounds to the corresponding amines. This Yersinia enterocolitica serotype O:8 / biotype 1B (strain NCTC 13174 / 8081) protein is FMN-dependent NADH:quinone oxidoreductase.